The following is a 370-amino-acid chain: Sphingolipid delta(4)-desaturase (370 aa).

3 helical membrane-spanning segments follow: residues 68 to 88, 92 to 112, and 128 to 148; these read VMGVVLLQLGIAYYLRHTPVF, FLTLAYVIGATANQAIFLAIH, and LFAVFANIPIGVPYSASFQPY. Positions 112 to 116 match the Histidine box-1 motif; it reads HELSH. Positions 149-153 match the Histidine box-2 motif; sequence HQLHH. 3 consecutive transmembrane segments (helical) span residues 173-193, 197-217, and 220-240; these read FLSSMPGKLFFAIFQIFFYAL, FITQIKFTYVHLVNVVFQLIF, and VMVTCWGWKALGYFIVSTFLA. The Histidine box-3 signature appears at 299–303; sequence HNEHH.

The protein belongs to the fatty acid desaturase type 1 family. DEGS subfamily.

The protein localises to the membrane. It carries out the reaction an N-acylsphinganine + 2 Fe(II)-[cytochrome b5] + O2 + 2 H(+) = an N-acylsphing-4-enine + 2 Fe(III)-[cytochrome b5] + 2 H2O. The protein operates within lipid metabolism; sphingolipid metabolism. Delta(4)-fatty-acid desaturase which introduces a double bond at the 4-position in the long-chain base (LCB) of ceramides. Required for the formation of the monounsaturated sphingoid base (E)-sphing-4-enine during glucosylceramide (GluCer) biosynthesis. This is Sphingolipid delta(4)-desaturase from Candida albicans (strain SC5314 / ATCC MYA-2876) (Yeast).